Here is a 249-residue protein sequence, read N- to C-terminus: MQFLAHDNFHTLQVKKVRFLHPQQEVFLLAGLLLNIKQFVRAIKERNNVFKIDVFLRSLLYQLPFHLGSCFHDAPRELIPATEPELCAWFSLQTGYAPASTSGRVNLHVPGTKTSRRRIIQRSFASDFSEKLKRFPECLFVSLELFQRLLSTWTKDVERRIFFSCREIPLGSDTLMELANLGEFLRVMVVGEQFHNSRLLSRLAVHCYKIYGEDGFISFWRIANLDHFDCFLTPEEILFSSSVYTEMFV.

An F-box-like domain is found at 63–67; the sequence is LPFHL.

Belongs to the polerovirus P0 protein family. Interacts (via F-box-like domain) with host AGO1; this interaction targets AGO1 for degradation, and thereby suppresses the silencing function of the latter. Interacts (via F-box-like domain) with host ASK1 and ASK2 (SKP proteins); these interactions are essential for viral pathogenicity. Part of a SCF P0 complex composed of P0 and the host proteins SKP and CUL1.

Suppressor of RNA-mediated gene silencing, also known as post-transcriptional gene silencing (PTGS), a mechanism of plant viral defense that limits the accumulation of viral RNAs. The P0 protein suppresses local PTGS using its F-box-like domain to mediate destabilization and degradation of the AGO1 protein. The sequence is that of Suppressor of silencing P0 from Turnip yellows virus (isolate FL-1) (TuYV).